The following is a 298-amino-acid chain: MMESGAGFVAMEERISPGSFFQYPLSGFRASPNRSPCPPSDRERYLTELLQERQKLGPFLQVMPNCCRLLNHEIRRVSSFPDLDRYEHGSPFRSLGQPTNGKLDLEGWSMMQAEENCHLQRASPFRGPSPVGWIGMPGLPNPPIVKKVIRLDVPVDKYPSYNFVGRILGPRGNSLKRVELATHCRVFIRGRGSVKDTVKEEKLKGKPGYEHLCEPLHVLIEAELPEDIINSRLEHAVHFLESLLKPMDESMDHYKREQLKELAALNGTLREESPSPSLSPCLSPSMSPFNSKRAKTEI.

The KH domain maps to 152 to 219; that stretch reads DVPVDKYPSY…EHLCEPLHVL (68 aa). Residues 266–298 form a disordered region; the sequence is NGTLREESPSPSLSPCLSPSMSPFNSKRAKTEI. Ser-273 and Ser-287 each carry phosphoserine. Positions 274–288 are enriched in low complexity; sequence PSPSLSPCLSPSMSP.

It localises to the nucleus. This chain is KH domain-containing protein At1g09660/At1g09670, found in Arabidopsis thaliana (Mouse-ear cress).